Reading from the N-terminus, the 85-residue chain is Putative sodium channel toxin Ts37 (85 aa).

Positions 1–20 are cleaved as a signal peptide; that stretch reads MAGEWACLLVSLVLLWGAAG. The region spanning 22-83 is the LCN-type CS-alpha/beta domain; that stretch reads RDGFLLDRNF…KIWGDSVRCR (62 aa). 4 disulfides stabilise this stretch: C32–C82, C36–C59, C45–C64, and C49–C66.

Belongs to the long (4 C-C) scorpion toxin superfamily. Sodium channel inhibitor family. Expressed by the venom gland.

The protein resides in the secreted. Functionally, putative sodium channel toxin. This is Putative sodium channel toxin Ts37 from Tityus serrulatus (Brazilian scorpion).